The chain runs to 377 residues: 3-dehydroquinate synthase (377 aa).

NAD(+) contacts are provided by residues 113–117 (GVIGD), 137–138 (TT), K150, and K159. Zn(2+) is bound by residues E192, H254, and H273.

This sequence belongs to the sugar phosphate cyclases superfamily. Dehydroquinate synthase family. Requires Co(2+) as cofactor. The cofactor is Zn(2+). NAD(+) serves as cofactor.

The protein resides in the cytoplasm. The catalysed reaction is 7-phospho-2-dehydro-3-deoxy-D-arabino-heptonate = 3-dehydroquinate + phosphate. Its pathway is metabolic intermediate biosynthesis; chorismate biosynthesis; chorismate from D-erythrose 4-phosphate and phosphoenolpyruvate: step 2/7. Catalyzes the conversion of 3-deoxy-D-arabino-heptulosonate 7-phosphate (DAHP) to dehydroquinate (DHQ). The polypeptide is 3-dehydroquinate synthase (Bartonella tribocorum (strain CIP 105476 / IBS 506)).